We begin with the raw amino-acid sequence, 118 residues long: UPF0102 protein Swit_0572 (118 aa).

This sequence belongs to the UPF0102 family.

This chain is UPF0102 protein Swit_0572, found in Rhizorhabdus wittichii (strain DSM 6014 / CCUG 31198 / JCM 15750 / NBRC 105917 / EY 4224 / RW1) (Sphingomonas wittichii).